The chain runs to 398 residues: Acetate kinase (398 aa).

Residue N9 participates in Mg(2+) binding. K16 contributes to the ATP binding site. A substrate-binding site is contributed by R90. Catalysis depends on D147, which acts as the Proton donor/acceptor. Residues 207 to 211 (HIGNG), 282 to 284 (DLR), and 330 to 334 (GVGEN) each bind ATP. E384 lines the Mg(2+) pocket.

The protein belongs to the acetokinase family. As to quaternary structure, homodimer. Mg(2+) is required as a cofactor. Requires Mn(2+) as cofactor.

Its subcellular location is the cytoplasm. The enzyme catalyses acetate + ATP = acetyl phosphate + ADP. Its pathway is metabolic intermediate biosynthesis; acetyl-CoA biosynthesis; acetyl-CoA from acetate: step 1/2. Functionally, catalyzes the formation of acetyl phosphate from acetate and ATP. Can also catalyze the reverse reaction. In Staphylococcus haemolyticus (strain JCSC1435), this protein is Acetate kinase.